The primary structure comprises 212 residues: Ribosome maturation factor RimM (212 aa).

The PRC barrel domain occupies 105–181 (EEEFYYADLI…IDSITAGLDN (77 aa)). Positions 181 to 212 (NAELSGEEDEAEGPESARGSRPRGPKSAGEPR) are disordered.

It belongs to the RimM family. In terms of assembly, binds ribosomal protein uS19.

Its subcellular location is the cytoplasm. Functionally, an accessory protein needed during the final step in the assembly of 30S ribosomal subunit, possibly for assembly of the head region. Essential for efficient processing of 16S rRNA. May be needed both before and after RbfA during the maturation of 16S rRNA. It has affinity for free ribosomal 30S subunits but not for 70S ribosomes. The protein is Ribosome maturation factor RimM of Chelativorans sp. (strain BNC1).